Here is a 310-residue protein sequence, read N- to C-terminus: Pantoate--beta-alanine ligase (310 aa).

Position 32-39 (32-39) interacts with ATP; sequence MGYLHEGH. The active-site Proton donor is the His-39. Gln-63 contacts (R)-pantoate. Gln-63 contributes to the beta-alanine binding site. Position 175–178 (175–178) interacts with ATP; that stretch reads GKKD. Residue Gln-181 coordinates (R)-pantoate. 212–215 contacts ATP; it reads MSSR.

It belongs to the pantothenate synthetase family. As to quaternary structure, homodimer. In terms of tissue distribution, expressed in roots, cotyledons, leaves, stems, cauline leaves, stigma, sepals and petals.

The protein resides in the cytoplasm. It is found in the cytosol. It carries out the reaction (R)-pantoate + beta-alanine + ATP = (R)-pantothenate + AMP + diphosphate + H(+). The protein operates within cofactor biosynthesis; (R)-pantothenate biosynthesis; (R)-pantothenate from (R)-pantoate and beta-alanine: step 1/1. Enzyme kinetics do not match Michaelis-Menten kinetics, suggesting allosteric behavior. Inhibited by high pantoate levels. Its function is as follows. Catalyzes the condensation of pantoate with beta-alanine to form pantothenate. Essential for panthotenate biosynthesis. The polypeptide is Pantoate--beta-alanine ligase (Arabidopsis thaliana (Mouse-ear cress)).